A 98-amino-acid chain; its full sequence is Acylphosphatase (98 aa).

One can recognise an Acylphosphatase-like domain in the interval 12–98; sequence TYYVRVRGVV…DKRFERFQQH (87 aa). Active-site residues include arginine 27 and asparagine 45.

This sequence belongs to the acylphosphatase family.

The catalysed reaction is an acyl phosphate + H2O = a carboxylate + phosphate + H(+). In Burkholderia thailandensis (strain ATCC 700388 / DSM 13276 / CCUG 48851 / CIP 106301 / E264), this protein is Acylphosphatase (acyP).